We begin with the raw amino-acid sequence, 436 residues long: mRNA cap guanine-N(7) methyltransferase (436 aa).

The disordered stretch occupies residues 1-50 (MSTKPEKPIWMSQEDYDRQYGSITGDESSTVSKKDSKVTANAPGDGNGSL). Residues 141–424 (SPIIKLRNFN…FYTMFAFRKV (284 aa)) enclose the mRNA cap 0 methyltransferase domain. Position 150–151 (150–151 (NN)) interacts with mRNA. 6 residues coordinate S-adenosyl-L-methionine: K154, G172, D194, D223, Q249, and Y254.

It belongs to the class I-like SAM-binding methyltransferase superfamily. mRNA cap 0 methyltransferase family.

The protein resides in the nucleus. It carries out the reaction a 5'-end (5'-triphosphoguanosine)-ribonucleoside in mRNA + S-adenosyl-L-methionine = a 5'-end (N(7)-methyl 5'-triphosphoguanosine)-ribonucleoside in mRNA + S-adenosyl-L-homocysteine. In terms of biological role, responsible for methylating the 5'-cap structure of mRNAs. The polypeptide is mRNA cap guanine-N(7) methyltransferase (ABD1) (Saccharomyces cerevisiae (strain ATCC 204508 / S288c) (Baker's yeast)).